Consider the following 512-residue polypeptide: Histidine ammonia-lyase (512 aa).

The 5-imidazolinone (Ala-Gly) cross-link spans 146–148 (ASG). Position 147 is a 2,3-didehydroalanine (Ser) (Ser-147).

It belongs to the PAL/histidase family. Contains an active site 4-methylidene-imidazol-5-one (MIO), which is formed autocatalytically by cyclization and dehydration of residues Ala-Ser-Gly.

The protein localises to the cytoplasm. It catalyses the reaction L-histidine = trans-urocanate + NH4(+). It participates in amino-acid degradation; L-histidine degradation into L-glutamate; N-formimidoyl-L-glutamate from L-histidine: step 1/3. The sequence is that of Histidine ammonia-lyase from Paracidovorax citrulli (strain AAC00-1) (Acidovorax citrulli).